Here is a 396-residue protein sequence, read N- to C-terminus: MAKKTILDLRDEDLKGKRVLVRVDFNVPLKNGVITDDRRIREALPTIKYLMDKGAKVILVSHLGRPKGFQDDLRLDPVAKRLSELLGKPVKKLNDCIGEEVEREISNMKEGDVILLENIRFYKEEEANDPEFAKKLASLADLYVNDAFGTAHRAHASTAGVAQYIPGVAGLLMKKEIEIMGKALESPERPFICILGGAKVSDKIGVIKNLMNKVDGFLIGGGMMFTFLKALGYEIGKSIVEEDKLDLAREIMNMAKERGIQFLLPKDAVVVKEIKEDAPTSIKDIDKFEKDDIGVDIGPKTIELFREEILKAKTIIWNGPMGIFEIPAFANGTRKIAEAIAENRNCVSIVGGGDSAAAIQTLGLEDKFTHISTGGGASLEFLEGKELPGVAVLQDK.

Residues 24–26, Arg39, 62–65, Arg120, and Arg153 contribute to the substrate site; these read DFN and HLGR. ATP contacts are provided by residues Lys203, Gly294, Glu325, and 352–355; that span reads GGDS.

The protein belongs to the phosphoglycerate kinase family. As to quaternary structure, monomer.

It localises to the cytoplasm. The enzyme catalyses (2R)-3-phosphoglycerate + ATP = (2R)-3-phospho-glyceroyl phosphate + ADP. It participates in carbohydrate degradation; glycolysis; pyruvate from D-glyceraldehyde 3-phosphate: step 2/5. The protein is Phosphoglycerate kinase of Dictyoglomus turgidum (strain DSM 6724 / Z-1310).